Consider the following 141-residue polypeptide: High mobility group B protein 3 (141 aa).

Basic and acidic residues-rich tracts occupy residues 1-12 (MKGAKSKAETRS) and 70-110 (GGEK…LEEG). 2 disordered regions span residues 1 to 40 (MKGAKSKAETRSTKLSVTKKPAKGAKGAAKDPNKPKRPSS) and 54 to 141 (KEEH…EDDD). The segment at residues 35–104 (PKRPSSAFFV…EYEKNMKAYN (70 aa)) is a DNA-binding region (HMG box). Position 122 is a phosphoserine (S122). Positions 124 to 141 (VNDEDDAEDGSEEEEDDD) are enriched in acidic residues.

It belongs to the HMGB family. Expressed in lateral roots, root tips, stems, cotyledons, leaves and flowers (excluding ovary and pedicels).

It localises to the nucleus. It is found in the cytoplasm. The protein resides in the cytosol. Its function is as follows. Binds preferentially double-stranded DNA. The sequence is that of High mobility group B protein 3 (HMGB3) from Arabidopsis thaliana (Mouse-ear cress).